The chain runs to 201 residues: Prostamide/prostaglandin F synthase (201 aa).

This sequence belongs to the peroxiredoxin-like PRXL2 family. Prostamide/prostaglandin F synthase subfamily.

Its subcellular location is the cytoplasm. It localises to the cytosol. It catalyses the reaction prostaglandin H2 + [thioredoxin]-dithiol = prostaglandin F2alpha + [thioredoxin]-disulfide. The catalysed reaction is prostamide F2alpha + [thioredoxin]-disulfide = prostamide H2 + [thioredoxin]-dithiol. In terms of biological role, catalyzes the reduction of prostaglandin-ethanolamide H(2) (prostamide H(2)) to prostamide F(2alpha) with NADPH as proton donor. Also able to reduce prostaglandin H(2) to prostaglandin F(2alpha). This is Prostamide/prostaglandin F synthase (prxl2b) from Xenopus tropicalis (Western clawed frog).